Here is a 25-residue protein sequence, read N- to C-terminus: Caerin-2.2 (25 aa).

This sequence belongs to the frog skin active peptide (FSAP) family. Caerin subfamily. As to expression, expressed by the skin parotoid and/or rostral glands.

Its subcellular location is the secreted. In terms of biological role, antimicrobial peptide, that adopts an alpha helical conformation which can disrupt bacterial membranes. Each caerin displays a different antimicrobial specificity. In Ranoidea caerulea (Green tree frog), this protein is Caerin-2.2.